Consider the following 295-residue polypeptide: 2S seed storage protein (295 aa).

An N-terminal signal peptide occupies residues 1–20 (MAKQIVLALAFAALVAFATA). Residues 21-161 (HTTIITTTIE…TITTTVTESN (141 aa)) constitute a propeptide that is removed on maturation. Over residues 195–208 (EQQMQQSPRSTRPY) the composition is skewed to polar residues. The disordered stretch occupies residues 195-215 (EQQMQQSPRSTRPYQQRPGQQ).

This sequence belongs to the 2S seed storage albumins family. The 38 kDa precursor may be cleaved into two polypeptides of approximately the same size. The mature protein is composed of a single polypeptide containing one or more intra-molecular disulfide linkages.

Its function is as follows. This is a 2S seed storage protein. The sequence is that of 2S seed storage protein (HAG5) from Helianthus annuus (Common sunflower).